Here is a 46-residue protein sequence, read N- to C-terminus: Transcriptional regulator SEHBP (46 aa).

Interacts with histone H2B. Also interacts with chromatin-binding proteins HMGN1 and HMGN3.

Its subcellular location is the nucleus. The protein resides in the cytoplasm. Plays a role in transcription regulation. The sequence is that of Transcriptional regulator SEHBP from Homo sapiens (Human).